Here is a 347-residue protein sequence, read N- to C-terminus: NADH-ubiquinone oxidoreductase chain 2 (347 aa).

The next 11 helical transmembrane spans lie at 1 to 21 (MNPM…FIVT), 25 to 45 (HWFM…PVLM), 59 to 79 (YFLT…INLM), 96 to 116 (MLIT…FWVP), 122 to 142 (VSLP…LSLL), 149 to 169 (VNMN…GWGG), 178 to 198 (IMAY…VYNP), 201 to 221 (SLLN…LLIF), 237 to 257 (APII…LPPL), 274 to 294 (NSVI…FFYM), and 326 to 346 (MLPL…LILL).

The protein belongs to the complex I subunit 2 family. Core subunit of respiratory chain NADH dehydrogenase (Complex I) which is composed of 45 different subunits. Interacts with TMEM242.

Its subcellular location is the mitochondrion inner membrane. It carries out the reaction a ubiquinone + NADH + 5 H(+)(in) = a ubiquinol + NAD(+) + 4 H(+)(out). Functionally, core subunit of the mitochondrial membrane respiratory chain NADH dehydrogenase (Complex I) that is believed to belong to the minimal assembly required for catalysis. Complex I functions in the transfer of electrons from NADH to the respiratory chain. The immediate electron acceptor for the enzyme is believed to be ubiquinone. The sequence is that of NADH-ubiquinone oxidoreductase chain 2 from Crocidura suaveolens gueldenstaedtii (Gueldenstaedt's shrew).